The primary structure comprises 334 residues: Beta-hexosaminidase (334 aa).

Substrate-binding positions include Asp-60, Arg-68, Arg-133, and 163–164 (KH). His-176 serves as the catalytic Proton donor/acceptor. The active-site Nucleophile is Asp-247.

The protein belongs to the glycosyl hydrolase 3 family. NagZ subfamily.

The protein localises to the cytoplasm. The enzyme catalyses Hydrolysis of terminal non-reducing N-acetyl-D-hexosamine residues in N-acetyl-beta-D-hexosaminides.. Its pathway is cell wall biogenesis; peptidoglycan recycling. Plays a role in peptidoglycan recycling by cleaving the terminal beta-1,4-linked N-acetylglucosamine (GlcNAc) from peptide-linked peptidoglycan fragments, giving rise to free GlcNAc, anhydro-N-acetylmuramic acid and anhydro-N-acetylmuramic acid-linked peptides. The polypeptide is Beta-hexosaminidase (Xanthomonas axonopodis pv. citri (strain 306)).